We begin with the raw amino-acid sequence, 104 residues long: Thioredoxin 1 (104 aa).

The region spanning 2–104 (VKIVTSQAEF…LKQLIEKYAA (103 aa)) is the Thioredoxin domain. Active-site nucleophile residues include cysteine 30 and cysteine 33. Residues cysteine 30 and cysteine 33 are joined by a disulfide bond.

It belongs to the thioredoxin family. In terms of processing, the disulfide bond between Cys-30 and Cys-33 acts as a redox-active center and is reduced by thioredoxin reductase TRXR.

The protein localises to the cytoplasm. Participates in various redox reactions through the reversible oxidation of its active center dithiol to a disulfide and catalyzes dithiol-disulfide exchange reactions. By modifying the redox status of targeted proteins, induces changes in their structure and activity. Reduces oxidized glutathione (GSSG), thereby acting as a backup for the glutathione redox system. Reduces nitroglutathione (GSNO), a compound involved in the transport of nitric oxide (NO). Also reduces oxidative stress by detoxifying hydrogen peroxide, tert-butyl hydroperoxide and cumene hydroperoxide. Activates ornithine aminotransferase OAT by reducing a disulfide bond in the substrate binding loop, thereby enhancing the affinity of OAT for its substrates. May reduce S-adenosyl-L-homocysteine hydrolase SAHH. In Plasmodium falciparum (isolate 3D7), this protein is Thioredoxin 1.